The chain runs to 49 residues: Isoflavone reductase homolog 2 (49 aa).

5–11 is a binding site for NADP(+); it reads GGTGYIG.

The protein belongs to the NmrA-type oxidoreductase family. Isoflavone reductase subfamily.

The protein resides in the cytoplasm. This is Isoflavone reductase homolog 2 from Pseudotsuga menziesii (Douglas-fir).